Consider the following 368-residue polypeptide: MNTIGKLFRLTTFGESHGKAIGGVIDGCPAGLFVDMETIERELLRRRPGQSHYTSPRQESDMVQFISGLFRGETTGAPIAFMIDNKDVRSADYDSLSSIFRPGHADYTYFHKYGIRDTRGGGRSSARETAVRVVAGAVAKQLLAPLGIRCTAYTSQIGPVCIPQENAKEYSPEEVESSPIRCPDPNASGLMEAVIETAKKESDSVGGIVDCQISDVPVGWGEPLYGKLHAALGAAMLSINAAKGFEVGDGFALASMRGSEANDQMVAAEDGGISFLSNHSGGISGGISTGQDIRFRVAFKPTPTIGQKQQTVNEQGESISLSAVGRHDPCVVPRAVPVVEAMTWLTLADAYLASRSGRCAHSSLKCNG.

Arginine 46 contributes to the NADP(+) binding site. FMN contacts are provided by residues 123 to 125, 240 to 241, glycine 285, 300 to 304, and arginine 326; these read RSS, NA, and KPTPT.

This sequence belongs to the chorismate synthase family. As to quaternary structure, homotetramer. FMNH2 serves as cofactor.

It catalyses the reaction 5-O-(1-carboxyvinyl)-3-phosphoshikimate = chorismate + phosphate. The protein operates within metabolic intermediate biosynthesis; chorismate biosynthesis; chorismate from D-erythrose 4-phosphate and phosphoenolpyruvate: step 7/7. Functionally, catalyzes the anti-1,4-elimination of the C-3 phosphate and the C-6 proR hydrogen from 5-enolpyruvylshikimate-3-phosphate (EPSP) to yield chorismate, which is the branch point compound that serves as the starting substrate for the three terminal pathways of aromatic amino acid biosynthesis. This reaction introduces a second double bond into the aromatic ring system. This is Chorismate synthase from Porphyromonas gingivalis (strain ATCC BAA-308 / W83).